The following is a 364-amino-acid chain: Probable protein disulfide-isomerase A6 (364 aa).

Positions 1–28 (MKMEMHQIWSRIALASFAFAILFVSVSA) are cleaved as a signal peptide. 2 Thioredoxin domains span residues 29–137 (DDVV…TEGG) and 139–256 (NVKI…EKSG). Catalysis depends on nucleophile residues cysteine 58, cysteine 61, cysteine 177, and cysteine 180. 2 disulfides stabilise this stretch: cysteine 58-cysteine 61 and cysteine 177-cysteine 180.

The protein belongs to the protein disulfide isomerase family.

It localises to the endoplasmic reticulum lumen. The catalysed reaction is Catalyzes the rearrangement of -S-S- bonds in proteins.. The protein is Probable protein disulfide-isomerase A6 of Medicago sativa (Alfalfa).